A 204-amino-acid polypeptide reads, in one-letter code: Recombination protein RecR (204 aa).

The segment at 61–76 (CACCNTFSETQVCSTC) adopts a C4-type zinc-finger fold. The 100-residue stretch at 84 to 183 (SLLCIVETPA…KVTRIARGIP (100 aa)) folds into the Toprim domain.

Belongs to the RecR family.

Functionally, may play a role in DNA repair. It seems to be involved in an RecBC-independent recombinational process of DNA repair. It may act with RecF and RecO. The protein is Recombination protein RecR of Polynucleobacter necessarius subsp. necessarius (strain STIR1).